Here is an 863-residue protein sequence, read N- to C-terminus: Leucine--tRNA ligase (863 aa).

The short motif at 42–52 (PYPSGKLHMGH) is the 'HIGH' region element. The 'KMSKS' region signature appears at 623–627 (KMSKS). Lys626 provides a ligand contact to ATP.

The protein belongs to the class-I aminoacyl-tRNA synthetase family.

The protein localises to the cytoplasm. The enzyme catalyses tRNA(Leu) + L-leucine + ATP = L-leucyl-tRNA(Leu) + AMP + diphosphate. This is Leucine--tRNA ligase from Paraburkholderia xenovorans (strain LB400).